Consider the following 303-residue polypeptide: Zinc transporter ZIP9-B (303 aa).

The chain crosses the membrane as a helical span at residues 7 to 27 (ISLLSLAMLVGCYVSGIIPLA). Residue asparagine 29 is glycosylated (N-linked (GlcNAc...) asparagine). Helical transmembrane passes span 35 to 55 (LKLV…AVIV), 102 to 122 (AYIG…DQIG), 142 to 162 (ITTT…LGAA), 172 to 192 (LIVF…LVSF), and 206 to 226 (HLLV…LGLS). Residue asparagine 237 is glycosylated (N-linked (GlcNAc...) asparagine). The next 2 membrane-spanning stretches (helical) occupy residues 240–260 (GVAM…HVLP) and 282–302 (LEVC…IGHQ).

It belongs to the ZIP transporter (TC 2.A.5) family.

The protein resides in the golgi apparatus. It is found in the trans-Golgi network membrane. The protein localises to the cell membrane. Its subcellular location is the cytoplasm. It localises to the perinuclear region. The protein resides in the mitochondrion. It is found in the nucleus. The catalysed reaction is Zn(2+)(in) = Zn(2+)(out). Transports zinc ions across cell and organelle membranes into the cytoplasm and regulates intracellular zinc homeostasis. Participates in the zinc ions efflux out of the secretory compartments. Regulates intracellular zinc level, resulting in the enhancement of AKT1 and MAPK3/MAPK1 (Erk1/2) phosphorylation in response to the BCR activation. Also functions as a membrane androgen receptor that mediates, through a G protein, the non-classical androgen signaling pathway, characterized by the activation of MAPK3/MAPK1 (Erk1/2) and transcription factors CREB1 or ATF1. Moreover, has dual functions as a membrane-bound androgen receptor and as an androgen-dependent zinc transporter both of which are mediated through an inhibitory G protein (Gi) that mediates both MAP kinase and zinc signaling leading to the androgen-dependent apoptotic process. In Xenopus laevis (African clawed frog), this protein is Zinc transporter ZIP9-B (slc39a9-b).